Consider the following 443-residue polypeptide: SURP and G-patch domain-containing protein 1-like protein (443 aa).

Disordered regions lie at residues 45–71 (IISN…KGGK) and 83–141 (LAPP…TVKK). An SURP motif repeat occupies 142–185 (VADKLASFVAKHGRPFEHITRQKNPGDTPFKFLFDENCADYKYY). 3 disordered regions span residues 198-221 (QTKD…AIPL), 241-272 (TPVE…RGAD), and 285-325 (AQEE…HHMG). Positions 248-265 (SSRSAQASITRPSDSDSF) are enriched in polar residues. Residues 285–300 (AQEEKMRRPRQSKDEM) are compositionally biased toward basic and acidic residues. The segment covering 307-316 (QGPSETSSTD) has biased composition (polar residues). The 48-residue stretch at 360 to 407 (ADNVGHKLLSKMGWKEGEGIGSSRKGMADPIMAGDVKTNNLGVGASAP) folds into the G-patch domain.

The protein resides in the nucleus. The chain is SURP and G-patch domain-containing protein 1-like protein from Arabidopsis thaliana (Mouse-ear cress).